The sequence spans 354 residues: MIKAMALSSAGVVSHLHPPSFSSSSGLSVNRVLFRNRNASPCGLSLPILNPSRSVLVFARGKNRKGFVSSSSSSPKKNKKKSLDGADNGGGEEEEDPFEALFNLLEEDLKNDNSDDEEISEEELEALADELARALGVGDDVDDIDLFGSVTGDVDVDVDNDDDDNDDDDNDDDDDDSEEDERPTKLKNWQLKRLAYALKAGRRKTSIKNLAAEVCLDRAYVLELLRDPPPKLLMLSATLPDEKPPVAAPENSSPDPSPVESLSAEDVVVEPKEKVKDEAVHVMQQRWSAQKRVKKAHIETLEKVYRRSKRPTNAVVSSIVQVTNLPRKRVLKWFEDKRAEDGVPDKRAPYQAPV.

Residues 63–70 (NRKGFVSS) carry the Nuclear localization signal 1 motif. 2 disordered regions span residues 65 to 98 (KGFV…EDPF) and 151 to 186 (TGDV…PTKL). The span at 154 to 181 (VDVDVDNDDDDNDDDDNDDDDDDSEEDE) shows a compositional bias: acidic residues. A Nuclear localization signal 2 motif is present at residues 191-198 (LKRLAYAL). Positions 243–264 (KPPVAAPENSSPDPSPVESLSA) are disordered. A DNA-binding region (homeobox) is located at residues 286-345 (RWSAQKRVKKAHIETLEKVYRRSKRPTNAVVSSIVQVTNLPRKRVLKWFEDKRAEDGVPD). The short motif at 293 to 300 (VKKAHIET) is the Nuclear localization signal 3 element.

It is found in the nucleus. Functionally, may modulate chromatin structure by regulation of nucleosome assembly/disassembly. Homeodomain transcription factor that mediates jasmonic acid (JA)-mediated COI1-dependent and abscisic acid (ABA)-mediated PMR4-dependent resistance to infection by necrotrophic fungal pathogens (e.g. B.cinerea and P.cucumerina) and bacterial pathogens (e.g. P.syringae DC3000); this resistance involves at least callose deposition. Required for the P.fluorescens WCS417r-triggered JA-dependent induced systemic resistance (ISR) against both P.syringae DC3000 and H.arabidopsidis. Negative regulator of the ABA-dependent drought resistance. In Arabidopsis thaliana (Mouse-ear cress), this protein is Protein OVEREXPRESSOR OF CATIONIC PEROXIDASE 3.